The following is a 561-amino-acid chain: PR domain zinc finger protein 14 (561 aa).

The interval 1-20 is disordered; that stretch reads MALPPSGETQSQDKANYLPQ. A compositionally biased stretch (polar residues) spans 7–20; the sequence is GETQSQDKANYLPQ. Residues 184 to 373 form an interaction with CBFA2T2 region; the sequence is GFNFTEEELS…GVPMNLRVTE (190 aa). An SET domain is found at 241–356; that stretch reads EGLCLMQTSF…RNQELLVWYG (116 aa). Residue Y355 participates in S-adenosyl-L-methionine binding. The segment at 390–416 adopts a C2H2-type 1; atypical zinc-finger fold; that stretch reads YRCERCGKVFTYKYYRDKHLKYTPCVD. 5 C2H2-type zinc fingers span residues 422-445, 451-473, 479-501, 507-530, and 536-558; these read FPCSLCQRSFEKRDRLRIHILHVH, YLCSTCGKSFSQSSSLNKHMRVH, YQCVYCTKKFTASSILRTHIRQH, FKCKHCGKAFASHAAHDSHVRRSH, and SSCDICGKGFLDQEAFYAHMRLH.

The protein belongs to the class V-like SAM-binding methyltransferase superfamily. As to quaternary structure, interacts with CBFA2T2. In terms of tissue distribution, restricted to embryonic stem cells and primordial germ cells. Not detected in epiblast-derived stem cells.

Its subcellular location is the nucleus. Its function is as follows. Transcription factor that has both positive and negative roles on transcription. Plays a role in cellular pluripotency. Essential for germ cell development at 2 levels: the reacquisition of potential pluripotency, including SOX2 up-regulation, and successful epigenetic reprogramming, characterized by EHMT1 repression. Its association with CBFA2T2 is required for the functions in pluripotency and germ cell formation. This is PR domain zinc finger protein 14 (Prdm14) from Mus musculus (Mouse).